A 91-amino-acid chain; its full sequence is Putative septation protein SpoVG (91 aa).

It belongs to the SpoVG family.

Its function is as follows. Could be involved in septation. The chain is Putative septation protein SpoVG from Clostridium beijerinckii (strain ATCC 51743 / NCIMB 8052) (Clostridium acetobutylicum).